A 698-amino-acid polypeptide reads, in one-letter code: Elongation factor G (698 aa).

Residues 10-285 (DKTRNIGIMA…GVVDYLPSPL (276 aa)) form the tr-type G domain. GTP-binding positions include 19-26 (AHIDAGKT), 83-87 (DTPGH), and 137-140 (NKMD).

This sequence belongs to the TRAFAC class translation factor GTPase superfamily. Classic translation factor GTPase family. EF-G/EF-2 subfamily.

Its subcellular location is the cytoplasm. Functionally, catalyzes the GTP-dependent ribosomal translocation step during translation elongation. During this step, the ribosome changes from the pre-translocational (PRE) to the post-translocational (POST) state as the newly formed A-site-bound peptidyl-tRNA and P-site-bound deacylated tRNA move to the P and E sites, respectively. Catalyzes the coordinated movement of the two tRNA molecules, the mRNA and conformational changes in the ribosome. The sequence is that of Elongation factor G from Lactobacillus johnsonii (strain CNCM I-12250 / La1 / NCC 533).